A 354-amino-acid chain; its full sequence is Uroporphyrinogen decarboxylase (354 aa).

Residues 27–31 (RQAGR), Asp77, Tyr154, Thr209, and His327 each bind substrate.

Belongs to the uroporphyrinogen decarboxylase family. As to quaternary structure, homodimer.

The protein localises to the cytoplasm. The enzyme catalyses uroporphyrinogen III + 4 H(+) = coproporphyrinogen III + 4 CO2. It participates in porphyrin-containing compound metabolism; protoporphyrin-IX biosynthesis; coproporphyrinogen-III from 5-aminolevulinate: step 4/4. Catalyzes the decarboxylation of four acetate groups of uroporphyrinogen-III to yield coproporphyrinogen-III. This Escherichia coli (strain UTI89 / UPEC) protein is Uroporphyrinogen decarboxylase.